Here is a 366-residue protein sequence, read N- to C-terminus: Lysophosphatidic acid receptor 1-A (366 aa).

The Extracellular segment spans residues 1–52; it reads MASLSEFVSEPISMMSQTSAASESQCYYNETIAFFYNRSGKYLATEWNAVSK. Disulfide bonds link Cys-26–Cys-192 and Cys-190–Cys-197. Asn-29 and Asn-37 each carry an N-linked (GlcNAc...) asparagine glycan. Residue Lys-41 coordinates a 1-acyl-sn-glycero-3-phosphate. A helical transmembrane segment spans residues 53-77; that stretch reads LVMGLGITVCIFIMLANLLVMVAIY. Topologically, residues 78–85 are cytoplasmic; it reads VNRRFHFP. Residues 86-109 form a helical membrane-spanning segment; it reads IYYLMANLAAADFFAGLAYFYLMF. Residues 110–123 lie on the Extracellular side of the membrane; sequence NTGPNTRRLTVSTW. A helical transmembrane segment spans residues 124–146; it reads LLRQGLIDTSLTASVANLLAIAI. An a 1-acyl-sn-glycero-3-phosphate-binding site is contributed by 126–131; it reads RQGLID. Residues 147 to 165 lie on the Cytoplasmic side of the membrane; it reads ERHITVFRMQLHTRMSNRR. Residues 166-186 traverse the membrane as a helical segment; that stretch reads VVVVIVVIWTVAIVMGAIPSV. Topologically, residues 187 to 206 are extracellular; sequence GWNCICDLEQCSNMAPLYSD. A helical membrane pass occupies residues 207–227; sequence SYLIFWTIFNLVTFVVMVVLY. Trp-212 provides a ligand contact to a 1-acyl-sn-glycero-3-phosphate. Residues 228-257 are Cytoplasmic-facing; the sequence is AHIFVYVRQKTMRMSRHSSGPRRNRDTMMS. A helical transmembrane segment spans residues 258–282; that stretch reads LLKTVVIVLGAFIVCWTPGLVLLLL. The Extracellular portion of the chain corresponds to 283–296; it reads DICCPQCNILAYEK. The cysteines at positions 286 and 289 are disulfide-linked. The helical transmembrane segment at 297–317 threads the bilayer; the sequence is FFLLLAEFNSAMNPIIYSYRD. The Cytoplasmic portion of the chain corresponds to 318 to 366; the sequence is KEMSATFKQILCCQRTENVNGPTEGSDRSASSLNHTILAGVHSNDHSVV.

Belongs to the G-protein coupled receptor 1 family. Expressed at high levels in oocytes and at lower levels in brain and spinal cord. Below detection level in lung, heart, kidney, liver, muscle, stomach, and intestine.

The protein localises to the cell surface. It is found in the cell membrane. Its subcellular location is the endosome. Receptor for lysophosphatidic acid (LPA). Plays a role in the reorganization of the actin cytoskeleton, cell migration, differentiation and proliferation, and thereby contributes to the responses to tissue damage and infectious agents. Activates downstream signaling cascades via the G(i)/G(o), G(12)/G(13), and G(q) families of heteromeric G proteins. Signaling inhibits adenylyl cyclase activity and decreases cellular cAMP levels. Signaling triggers an increase of cytoplasmic Ca(2+) levels. Signaling leads to the activation of phospholipase C (PLC) and the formation of inositol 1,4,5-trisphosphate. Signaling mediates activation of down-stream MAP kinases. Contributes to the regulation of cell shape. Promotes Rho-dependent reorganization of the actin cytoskeleton in neuronal cells and neurite retraction. Promotes the activation of Rho and the formation of actin stress fibers. Promotes formation of lamellipodia at the leading edge of migrating cells via activation of Rac. Through its function as lysophosphatidic acid receptor, plays a role in chemotaxis and cell migration, including responses to injury and wounding. Promotes cell proliferation in response to lysophosphatidic acid. The protein is Lysophosphatidic acid receptor 1-A (lpar1-a) of Xenopus laevis (African clawed frog).